Here is a 471-residue protein sequence, read N- to C-terminus: ATP synthase subunit beta (471 aa).

153 to 160 (GGAGVGKT) serves as a coordination point for ATP.

The protein belongs to the ATPase alpha/beta chains family. F-type ATPases have 2 components, CF(1) - the catalytic core - and CF(0) - the membrane proton channel. CF(1) has five subunits: alpha(3), beta(3), gamma(1), delta(1), epsilon(1). CF(0) has three main subunits: a(1), b(2) and c(9-12). The alpha and beta chains form an alternating ring which encloses part of the gamma chain. CF(1) is attached to CF(0) by a central stalk formed by the gamma and epsilon chains, while a peripheral stalk is formed by the delta and b chains.

It is found in the cell inner membrane. The catalysed reaction is ATP + H2O + 4 H(+)(in) = ADP + phosphate + 5 H(+)(out). Functionally, produces ATP from ADP in the presence of a proton gradient across the membrane. The catalytic sites are hosted primarily by the beta subunits. The sequence is that of ATP synthase subunit beta from Verminephrobacter eiseniae (strain EF01-2).